A 67-amino-acid polypeptide reads, in one-letter code: Large ribosomal subunit protein bL31 (67 aa).

Cys16, Cys18, Cys36, and Cys39 together coordinate Zn(2+).

This sequence belongs to the bacterial ribosomal protein bL31 family. Type A subfamily. As to quaternary structure, part of the 50S ribosomal subunit. Requires Zn(2+) as cofactor.

In terms of biological role, binds the 23S rRNA. This chain is Large ribosomal subunit protein bL31, found in Aliarcobacter butzleri (strain RM4018) (Arcobacter butzleri).